The sequence spans 577 residues: Aspartate--tRNA ligase (577 aa).

Glu-169 provides a ligand contact to L-aspartate. Residues 193 to 196 (QLYK) are aspartate. Position 215 (Arg-215) interacts with L-aspartate. Residues 215–217 (RDE) and Gln-224 each bind ATP. His-440 lines the L-aspartate pocket. Glu-474 lines the ATP pocket. Arg-481 is a binding site for L-aspartate. ATP is bound at residue 526 to 529 (GIDR).

It belongs to the class-II aminoacyl-tRNA synthetase family. Type 1 subfamily. As to quaternary structure, homodimer.

The protein resides in the cytoplasm. The enzyme catalyses tRNA(Asp) + L-aspartate + ATP = L-aspartyl-tRNA(Asp) + AMP + diphosphate. In terms of biological role, catalyzes the attachment of L-aspartate to tRNA(Asp) in a two-step reaction: L-aspartate is first activated by ATP to form Asp-AMP and then transferred to the acceptor end of tRNA(Asp). This chain is Aspartate--tRNA ligase, found in Mesoplasma florum (strain ATCC 33453 / NBRC 100688 / NCTC 11704 / L1) (Acholeplasma florum).